The sequence spans 20 residues: Methyl-coenzyme M reductase subunit gamma (20 aa).

The tract at residues 1-20 (AYERQFYPGATSVAENNIGH) is disordered.

This sequence belongs to the methyl-coenzyme M reductase gamma subunit family. In terms of assembly, MCR from M.thermophila is a heterotrimer composed of an alpha, a beta, and a gamma subunit. It depends on coenzyme F430 as a cofactor.

Its subcellular location is the cytoplasm. The enzyme catalyses coenzyme B + methyl-coenzyme M = methane + coenzyme M-coenzyme B heterodisulfide. Its pathway is one-carbon metabolism; methyl-coenzyme M reduction; methane from methyl-coenzyme M: step 1/1. In terms of biological role, component of the methyl-coenzyme M reductase (MCR) I that catalyzes the reductive cleavage of methyl-coenzyme M (CoM-S-CH3 or 2-(methylthio)ethanesulfonate) using coenzyme B (CoB or 7-mercaptoheptanoylthreonine phosphate) as reductant which results in the production of methane and the mixed heterodisulfide of CoB and CoM (CoM-S-S-CoB). This is the final step in methanogenesis. This Methanosarcina thermophila protein is Methyl-coenzyme M reductase subunit gamma.